Reading from the N-terminus, the 127-residue chain is Small ribosomal subunit protein uS12 (127 aa).

Residues I8–P28 are disordered. D89 is modified (3-methylthioaspartic acid). The interval L102–K127 is disordered. Over residues G113–K127 the composition is skewed to basic residues.

This sequence belongs to the universal ribosomal protein uS12 family. In terms of assembly, part of the 30S ribosomal subunit. Contacts proteins S8 and S17. May interact with IF1 in the 30S initiation complex.

In terms of biological role, with S4 and S5 plays an important role in translational accuracy. Functionally, interacts with and stabilizes bases of the 16S rRNA that are involved in tRNA selection in the A site and with the mRNA backbone. Located at the interface of the 30S and 50S subunits, it traverses the body of the 30S subunit contacting proteins on the other side and probably holding the rRNA structure together. The combined cluster of proteins S8, S12 and S17 appears to hold together the shoulder and platform of the 30S subunit. In Nostoc sp. (strain PCC 7120 / SAG 25.82 / UTEX 2576), this protein is Small ribosomal subunit protein uS12.